The sequence spans 133 residues: Small ribosomal subunit protein mS23 (133 aa).

Belongs to the mitochondrion-specific ribosomal protein mS23 family. Component of the mitochondrial ribosome small subunit (28S) which comprises a 12S rRNA and about 30 distinct proteins.

The protein localises to the mitochondrion. In Caenorhabditis elegans, this protein is Small ribosomal subunit protein mS23 (mrps-23).